We begin with the raw amino-acid sequence, 364 residues long: Aminomethyltransferase (364 aa).

The protein belongs to the GcvT family. In terms of assembly, the glycine cleavage system is composed of four proteins: P, T, L and H.

It carries out the reaction N(6)-[(R)-S(8)-aminomethyldihydrolipoyl]-L-lysyl-[protein] + (6S)-5,6,7,8-tetrahydrofolate = N(6)-[(R)-dihydrolipoyl]-L-lysyl-[protein] + (6R)-5,10-methylene-5,6,7,8-tetrahydrofolate + NH4(+). The glycine cleavage system catalyzes the degradation of glycine. This Shigella sonnei (strain Ss046) protein is Aminomethyltransferase.